Here is a 455-residue protein sequence, read N- to C-terminus: Post-transcriptional regulator MTA (455 aa).

The disordered stretch occupies residues 17-163; sequence DSVSSSEFDE…QVNCQRQDDD (147 aa). The segment covering 23–42 has biased composition (acidic residues); that stretch reads EFDESRDDETDAPTLEDEQL. Over residues 88-98 the composition is skewed to low complexity; it reads SPLSRPRSPSP. 3 consecutive short sequence motifs (nuclear localization signal) follow at residues 101 to 107, 121 to 130, and 143 to 152; these read RYGKKIK, KRPRRRPRDR, and RAAPKRATRR. Zn(2+) is bound by residues Cys-333, His-423, Cys-427, and Cys-432. The segment at 333 to 432 adopts a CHC2-type zinc-finger fold; sequence CVFDKQSELA…HHSLCRNSEC (100 aa).

This sequence belongs to the HHV-1 ICP27 protein family. In terms of assembly, homodimer. Homodimerization is required for transactivation. Interacts with host ALYREF. Associates in a complex with RNA, and host export factors NXF1/TAP and ALYREF; these interactions allow nuclear export of viral transcripts. Interacts with protein K-bZIP/K8; this interaction promotes viral gene expression during lytic infection. Interacts with host PABPC1. Interacts with host AGO2 and TNRC6A; these interactions inhibit host P-body formation. Interacts with PRKRA and EIF2AK2/PKR; these interactions inhibit host stress granule formation. Proteolytically cleaved by host caspase-7 (CASP7), leading to its inactivation, thereby preventing expression of viral lytic genes.

It localises to the host cytoplasm. Its subcellular location is the host nucleus. Functionally, post-transcriptional regulator that plays an essential role in the expression of viral lytic genes and productive viral replication. Possesses numerous activities that promote the expression of viral genes including enhancement of RNA stability, promotion of RNA splicing and stimulation of protein translation often via its ability to interact with different cellular cofactors. Stabilizes polyadenylated nuclear (PAN) RNA by cooperative binding to a 9-nt core of the MRE (MTA responsive element) together with host PABPC1. Functions as a viral splicing factor and promotes expression of intron-containing viral lytic genes. Protects viral transcripts from specific nuclear RNA decay pathways by preventing host MTREX recruitment that promotes unwinding and degradation of structured RNA substrates. Plays a role in the inhibition of host P-body formation by altering the scaffolding activity of TNRC6A at the initial stage thereby enhancing virus production. Also inhibits host stress granule formation by blocking autophosphorylation of EIF2AK2/PKR and its subsequent binding to dsRNA. This chain is Post-transcriptional regulator MTA, found in Human herpesvirus 8 type P (isolate GK18) (HHV-8).